We begin with the raw amino-acid sequence, 298 residues long: N-acetylmuramic acid 6-phosphate etherase (298 aa).

In terms of domain architecture, SIS spans 54–217 (TIKAMKQGGR…STTVMIGLGK (164 aa)). Glu82 (proton donor) is an active-site residue. Residue Glu113 is part of the active site.

This sequence belongs to the GCKR-like family. MurNAc-6-P etherase subfamily. In terms of assembly, homodimer.

The catalysed reaction is N-acetyl-D-muramate 6-phosphate + H2O = N-acetyl-D-glucosamine 6-phosphate + (R)-lactate. It participates in amino-sugar metabolism; N-acetylmuramate degradation. Specifically catalyzes the cleavage of the D-lactyl ether substituent of MurNAc 6-phosphate, producing GlcNAc 6-phosphate and D-lactate. In Halalkalibacterium halodurans (strain ATCC BAA-125 / DSM 18197 / FERM 7344 / JCM 9153 / C-125) (Bacillus halodurans), this protein is N-acetylmuramic acid 6-phosphate etherase.